The primary structure comprises 1254 residues: DNA-directed RNA polymerase subunit beta (1254 aa).

Belongs to the RNA polymerase beta chain family. In terms of assembly, the RNAP catalytic core consists of 2 alpha, 1 beta, 1 beta' and 1 omega subunit. When a sigma factor is associated with the core the holoenzyme is formed, which can initiate transcription.

It carries out the reaction RNA(n) + a ribonucleoside 5'-triphosphate = RNA(n+1) + diphosphate. Functionally, DNA-dependent RNA polymerase catalyzes the transcription of DNA into RNA using the four ribonucleoside triphosphates as substrates. This Protochlamydia amoebophila (strain UWE25) protein is DNA-directed RNA polymerase subunit beta.